Reading from the N-terminus, the 846-residue chain is Vinculin (846 aa).

The tract at residues 1–257 is interaction with TLN; the sequence is MPVKFHTKTL…VLQLTTTFEE (257 aa). Residues 315–370 are a coiled coil; it reads RAKLLAAADELDQILKELEELQAKGLGDSRQARALAHAAAVKLQELEQEIRKALAE. The disordered stretch occupies residues 617-646; it reads WVPPRPPLPELEEEEEPPELPPPPEDPASL.

The protein belongs to the vinculin/alpha-catenin family. In terms of assembly, monomer. Interacts with TLN (talin); the interaction facilitates VIN1 binding to F-actin. Expressed in epithelial tissues, specifically the pinacoderm (outer epithelium) and choanoderm (feeding epithelium) (at protein level). Also detected in migratory cells of the mesohyl (at protein level).

Its subcellular location is the cytoplasm. The protein localises to the cell cortex. It localises to the cell projection. The protein resides in the filopodium. It is found in the cytoskeleton. Functionally, actin filament (F-actin)-binding protein which may play a role in cell-cell adhesion. The polypeptide is Vinculin (Oscarella pearsei (Sponge)).